Reading from the N-terminus, the 1133-residue chain is Guanine nucleotide-binding protein G(s) subunit alpha isoforms XLas (1133 aa).

4 disordered regions span residues M1–L195, D322–A552, S611–K648, and R724–M744. The span at L31–E48 shows a compositional bias: low complexity. Over residues D347 to A362 the composition is skewed to basic and acidic residues. Composition is skewed to low complexity over residues P391–A404, G459–E471, A482–S498, A515–A525, and R535–A552. Residues P633–T643 show a composition bias toward pro residues. A compositionally biased stretch (basic and acidic residues) spans K732 to M744. A coiled-coil region spans residues M737 to R761. Residues C778–L1133 enclose the G-alpha domain. A G1 motif region spans residues R781–T794. Position 786–794 (G786–T794) interacts with GTP. Position 793 (S793) interacts with Mg(2+). The segment at F807–A828 is disordered. Residues D935–T943 form a G2 motif region. GTP is bound by residues L936 to T943, D962 to Q966, and N1031 to D1034. R940 is subject to ADP-ribosylarginine; by cholera toxin. A Mg(2+)-binding site is contributed by T943. The segment at F958–R967 is G3 motif. Residues I1027 to D1034 are G4 motif. S1091 carries the phosphoserine modification. The interval T1103–T1108 is G5 motif. A1105 contributes to the GTP binding site.

The protein belongs to the G-alpha family. G(s) subfamily. As to quaternary structure, g proteins are composed of 3 units; alpha, beta and gamma. The alpha chain contains the guanine nucleotide binding site. Interacts through its N-terminal region with ALEX which is produced from the same locus in a different open reading frame. This interaction may inhibit its adenylyl cyclase-stimulating activity. Interacts with MAGED2.

The protein resides in the cell membrane. The protein localises to the apical cell membrane. It catalyses the reaction GTP + H2O = GDP + phosphate + H(+). Guanine nucleotide-binding proteins (G proteins) function as transducers in numerous signaling pathways controlled by G protein-coupled receptors (GPCRs). The alpha chain contains the guanine nucleotide binding site and alternates between an active, GTP-bound state and an inactive, GDP-bound state. Signaling by an activated GPCR promotes GDP release and GTP binding. The alpha subunit has a low GTPase activity that converts bound GTP to GDP, thereby terminating the signal. Both GDP release and GTP hydrolysis are modulated by numerous regulatory proteins. Signaling involves the activation of adenylyl cyclases, resulting in increased levels of the signaling molecule cAMP. GNAS functions downstream of several GPCRs, including beta-adrenergic receptors. XLas isoforms interact with the same set of receptors as Gnas isoforms. This is Guanine nucleotide-binding protein G(s) subunit alpha isoforms XLas from Mus musculus (Mouse).